A 744-amino-acid chain; its full sequence is MAKREDSPGPEVQPMDKQFLVCSICLDRYRCPKVLPCLHTFCERCLQNYIPPQSLTLSCPVCRQTSILPEQGVSALQNNFFISSLMEAMQQAPEGAHDPEDPHPLSAVAGRPLSCPNHEGKTMEFYCEACETAMCGECRAGEHREHGTVLLRDVVEQHKAALQRQLEAVRGRLPQLSAAIALVGGISQQLQERKAEALAQISAAFEDLEQALQQRKQALVSDLESICGAKQKVLQTQLDTLRQGQEHIGSSCSFAEQALRLGSAPEVLLVRKHMRERLAALAAQAFPERPHENAQLELVLEVDGLRRSVLNLGALLTTSATAHETVATGEGLRQALVGQPASLTVTTKDKDGRLVRTGSAELCAEITGPDGVRLAVPVVDHKNGTYELVYTARTEGDLLLSVLLYGQPVRGSPFRVRALRPGDLPPSPDDVKRRVKSPGGPGSHVRQKAVRRPSSMYSTGGKRKDNPIEDELVFRVGSRGREKGEFTNLQGVSAASSGRIVVADSNNQCIQVFSNEGQFKFRFGVRGRSPGQLQRPTGVAVDTNGDIIVADYDNRWVSIFSPEGKFKTKIGAGRLMGPKGVAVDRNGHIIVVDNKSCCVFTFQPNGKLVGRFGGRGATDRHFAGPHFVAVNNKNEIVVTDFHNHSVKVYSADGEFLFKFGSHGEGNGQFNAPTGVAVDSNGNIIVADWGNSRIQVFDSSGSFLSYINTSAEPLYGPQGLALTSDGHVVVADAGNHCFKAYRYLQ.

At A2 the chain carries N-acetylalanine. The segment at 2–290 is interaction with KIF21B; it reads AKREDSPGPE…LAAQAFPERP (289 aa). S7 bears the Phosphoserine mark. The segment at 22-63 adopts an RING-type zinc-finger fold; sequence CSICLDRYRCPKVLPCLHTFCERCLQNYIPPQSLTLSCPVCR. The B box-type zinc-finger motif lies at 110–151; it reads GRPLSCPNHEGKTMEFYCEACETAMCGECRAGEHREHGTVLL. Positions 115, 118, 138, and 143 each coordinate Zn(2+). The stretch at 153–224 forms a coiled coil; that stretch reads DVVEQHKAAL…RKQALVSDLE (72 aa). The stretch at 317–418 is one Filamin repeat; sequence TTSATAHETV…VRGSPFRVRA (102 aa). The interval 419 to 464 is disordered; the sequence is LRPGDLPPSPDDVKRRVKSPGGPGSHVRQKAVRRPSSMYSTGGKRK. The residue at position 427 (S427) is a Phosphoserine. NHL repeat units follow at residues 473-516, 520-563, 564-605, 609-652, 656-699, and 700-743; these read VFRV…FSNE, KFRF…FSPE, GKFK…FQPN, VGRF…YSAD, LFKF…FDSS, and GSFL…YRYL.

Belongs to the TRIM/RBCC family. Forms homooligomers. Interacts with TRIM2; this interaction reduces TRIM2 activity. Associates with myosin-Vb (MYO5B) and alpha-actinin-4 (ACTN4). Component of the CART complex, at least composed of ACTN4, HGS/HRS, MYO5B and TRIM3. Interacts with ZFYVE28/LST2. Interacts with KIF21B.

The protein localises to the cytoplasm. Its subcellular location is the early endosome. It is found in the golgi apparatus. It localises to the trans-Golgi network. The protein resides in the cell projection. The protein localises to the dendrite. It carries out the reaction S-ubiquitinyl-[E2 ubiquitin-conjugating enzyme]-L-cysteine + [acceptor protein]-L-lysine = [E2 ubiquitin-conjugating enzyme]-L-cysteine + N(6)-ubiquitinyl-[acceptor protein]-L-lysine.. Functionally, E3 ubiquitin ligase that plays essential roles in neuronal functions such as regulation of neuronal plasticity, learning, and memory. In addition to its neuronal functions, participates in other biological processes such as innate immunity or cell cycle regulation. Component of the cytoskeleton-associated recycling or transport complex in neurons, polyubiquitinates gamma-actin, thus regulating neuronal plasticity, learning, and memory. Ubiquitinates postsynaptic scaffold GKAP, a neuronal substrate involved in synaptic remodeling and thereby modulates dendritic spine morphology. Positively regulates motility of microtubule-dependent motor protein KIF21B. Induces growth arrest via its RING-dependent E3 ligase activity and ubiquinates CDKN1A. Positively regulates TLR3-mediated signaling by mediating 'Lys-63'-linked polyubiquitination of TLR3. In turn, promotes the recognition and sorting of polyubiquitinated TLR3 by the ESCRT complexes. This Mus musculus (Mouse) protein is Tripartite motif-containing protein 3 (Trim3).